The following is a 307-amino-acid chain: Major immediate early protein (307 aa).

Residues 39 to 92 (CAVCLETYCVQSNNIIDFLMPSECTHLFCYKCVLNMYKNAMNVPRAAVSCPMCN) form an RING-type zinc finger.

This chain is Major immediate early protein (PE38), found in Orgyia pseudotsugata multicapsid polyhedrosis virus (OpMNPV).